The following is a 214-amino-acid chain: Superoxide dismutase [Mn] (214 aa).

Residues His-27, His-82, Asp-169, and His-173 each coordinate Mn(2+).

This sequence belongs to the iron/manganese superoxide dismutase family. Homodimer. It depends on Mn(2+) as a cofactor.

The catalysed reaction is 2 superoxide + 2 H(+) = H2O2 + O2. Destroys superoxide anion radicals which are normally produced within the cells and which are toxic to biological systems. In Pasteurella multocida (strain Pm70), this protein is Superoxide dismutase [Mn] (sodA).